The following is a 270-amino-acid chain: MKIDVLTIFPEMFTGPMDVSIIGRAREKGILSFNAHDVRAYTTNKHRRVDDTPFGGGAGMVMNAQPFFDALAAILGPRELRDPLRSRVVLLTPQGAVFSQAKARELSGLQQLVLICGRYEGIDDRVRQAWVDEEISIGDYVLTGGELPAMVVIDAVVRLLPGALGDETSAEEESFSDGLLEYPQYTKPALFRGMEAPPELLSGHHAAIRRWRRKEAFKRTYQNRPELLIGRPLPFDDQVLLAEALRELGLDAEIPEKPKKKRAKGREPRT.

Residues Gly-117 and 137–142 contribute to the S-adenosyl-L-methionine site; that span reads IGDYVL.

Belongs to the RNA methyltransferase TrmD family. As to quaternary structure, homodimer.

It is found in the cytoplasm. The catalysed reaction is guanosine(37) in tRNA + S-adenosyl-L-methionine = N(1)-methylguanosine(37) in tRNA + S-adenosyl-L-homocysteine + H(+). Specifically methylates guanosine-37 in various tRNAs. In Heliobacterium modesticaldum (strain ATCC 51547 / Ice1), this protein is tRNA (guanine-N(1)-)-methyltransferase.